The sequence spans 511 residues: 2-isopropylmalate synthase (511 aa).

Residues 6-269 (IIIFDTTLRD…YTDIKCENIF (264 aa)) enclose the Pyruvate carboxyltransferase domain. Residues Asp-15, His-203, His-205, and Asn-239 each contribute to the Mn(2+) site. The regulatory domain stretch occupies residues 394–511 (ILEKLSVISG…SLKVEERKMA (118 aa)).

Belongs to the alpha-IPM synthase/homocitrate synthase family. LeuA type 1 subfamily. As to quaternary structure, homodimer. Mn(2+) is required as a cofactor.

The protein localises to the cytoplasm. The enzyme catalyses 3-methyl-2-oxobutanoate + acetyl-CoA + H2O = (2S)-2-isopropylmalate + CoA + H(+). The protein operates within amino-acid biosynthesis; L-leucine biosynthesis; L-leucine from 3-methyl-2-oxobutanoate: step 1/4. Catalyzes the condensation of the acetyl group of acetyl-CoA with 3-methyl-2-oxobutanoate (2-ketoisovalerate) to form 3-carboxy-3-hydroxy-4-methylpentanoate (2-isopropylmalate). The protein is 2-isopropylmalate synthase of Campylobacter jejuni subsp. jejuni serotype O:6 (strain 81116 / NCTC 11828).